The primary structure comprises 84 residues: U21-theraphotoxin-Cg1a 1 (84 aa).

An N-terminal signal peptide occupies residues 1 to 21 (MKVSVLITLAVLGVMFLLTSA). Residues 22–47 (EERGSDQMDSPAWLKSMEIIFQSEER) constitute a propeptide that is removed on maturation. 3 disulfide bridges follow: Cys-49-Cys-63, Cys-56-Cys-68, and Cys-62-Cys-76. Residue Val-82 is modified to Valine amide.

It belongs to the neurotoxin 10 (Hwtx-1) family. 05 (F4a) subfamily. In terms of tissue distribution, expressed by the venom gland.

The protein resides in the secreted. In terms of biological role, probable ion channel inhibitor. The protein is U21-theraphotoxin-Cg1a 1 of Chilobrachys guangxiensis (Chinese earth tiger tarantula).